The primary structure comprises 274 residues: Large ribosomal subunit protein uL2cz/uL2cy (274 aa).

Disordered regions lie at residues 1 to 23 (MAIH…SQVK) and 223 to 274 (MNPV…RRSK).

This sequence belongs to the universal ribosomal protein uL2 family. As to quaternary structure, part of the 50S ribosomal subunit.

It localises to the plastid. The protein resides in the chloroplast. This chain is Large ribosomal subunit protein uL2cz/uL2cy (rpl2-A), found in Ranunculus macranthus (Large buttercup).